A 197-amino-acid polypeptide reads, in one-letter code: Thymidine kinase (197 aa).

ATP contacts are provided by residues 9–16 (AAMNAGKS) and 83–86 (DESQ). The active-site Proton acceptor is glutamate 84. Residues cysteine 141, cysteine 143, cysteine 178, and cysteine 181 each coordinate Zn(2+).

Belongs to the thymidine kinase family. Homotetramer.

Its subcellular location is the cytoplasm. It catalyses the reaction thymidine + ATP = dTMP + ADP + H(+). This chain is Thymidine kinase, found in Albidiferax ferrireducens (strain ATCC BAA-621 / DSM 15236 / T118) (Rhodoferax ferrireducens).